A 300-amino-acid polypeptide reads, in one-letter code: MRSLVAQEKFRNIGLIARSESEQALYSLRQLIHFLHGRDCTVILDKHIIGHLPEMGLQAASASQMGEACDLVIVVGGDGSLLGAARTLARYKVPVLGVNRGHLGFLTDILPSEIESRVGQVLDGEYSTEKRFLLDLEVRRGRTVVGEGSALNDIVLLSGDSVHMIDFELMIDGHFVYGQRSDGLIVSTPTGSTAYALSGGGPIMHPKLDAMVLVPLNPHTLTSRPLVVAGDSEIKIHITTEKVRPLVSCDGTEGIRLQVDDVIAIRKKPHRLHLIHPPGHDFYQACRSKLGWSSRPGDNN.

Catalysis depends on Asp78, which acts as the Proton acceptor. Residues 78-79 (DG), 152-153 (ND), His163, Arg180, Asp182, and 193-198 (TAYALS) each bind NAD(+).

This sequence belongs to the NAD kinase family. A divalent metal cation is required as a cofactor.

The protein resides in the cytoplasm. The catalysed reaction is NAD(+) + ATP = ADP + NADP(+) + H(+). In terms of biological role, involved in the regulation of the intracellular balance of NAD and NADP, and is a key enzyme in the biosynthesis of NADP. Catalyzes specifically the phosphorylation on 2'-hydroxyl of the adenosine moiety of NAD to yield NADP. In Alcanivorax borkumensis (strain ATCC 700651 / DSM 11573 / NCIMB 13689 / SK2), this protein is NAD kinase.